We begin with the raw amino-acid sequence, 580 residues long: Arginine--tRNA ligase (580 aa).

Residues 131–141 (ANPTGPLHVGH) carry the 'HIGH' region motif.

This sequence belongs to the class-I aminoacyl-tRNA synthetase family. Monomer.

It is found in the cytoplasm. It catalyses the reaction tRNA(Arg) + L-arginine + ATP = L-arginyl-tRNA(Arg) + AMP + diphosphate. This Roseobacter denitrificans (strain ATCC 33942 / OCh 114) (Erythrobacter sp. (strain OCh 114)) protein is Arginine--tRNA ligase.